The primary structure comprises 241 residues: MATNAKPVYQRILLKLSGEALQGAEGFGIDASVLDRMAQEVKELVELGIQVGVVIGGGNLFRGAGLAQAGMNRVVGDHMGMLATVMNGLAMRDALHRAYVNARLMSAIPLNGVCDNYSWAEAISLLRHNRVVIFAAGTGNPFFTTDSAACLRGIEIEADVVLKATKVDGVYSADPVKNPDATLYEQLTYQDVLEQELKVMDLAAFTLARDHNLPIRVFNMNKPGALRRVVMGENEGTLIAK.

Lys-15–Gly-18 provides a ligand contact to ATP. The segment at Gly-23 to Gly-28 is involved in allosteric activation by GTP. Gly-57 provides a ligand contact to UMP. ATP-binding residues include Gly-58 and Arg-62. UMP contacts are provided by residues Asp-77 and Thr-138 to Thr-145. 3 residues coordinate ATP: Thr-165, Tyr-171, and Asp-174.

It belongs to the UMP kinase family. In terms of assembly, homohexamer.

Its subcellular location is the cytoplasm. The enzyme catalyses UMP + ATP = UDP + ADP. It participates in pyrimidine metabolism; CTP biosynthesis via de novo pathway; UDP from UMP (UMPK route): step 1/1. With respect to regulation, allosterically activated by GTP. Inhibited by UTP. In terms of biological role, catalyzes the reversible phosphorylation of UMP to UDP. This is Uridylate kinase from Yersinia pseudotuberculosis serotype O:1b (strain IP 31758).